The following is a 637-amino-acid chain: Probable membrane transporter protein MamO (637 aa).

Residues 1–24 (MIEVGETMGELPTNKIVFCERSWK) are Cytoplasmic-facing. Residues 25–45 (TPVSILAFLIFVTFAWGIYLL) traverse the membrane as a helical segment. At 46–352 (DHYDEDDNFH…AKIGGYSVAD (307 aa)) the chain is on the lumenal side. Residues 78-268 (LYHTVPPAVV…VIVSHLQDVV (191 aa)) are protease-like. A divalent metal cation contacts are provided by histidine 148 and histidine 263. The chain crosses the membrane as a helical span at residues 353–373 (IVGLVMLALAAGVTGGMMTMG). The TSUP-like stretch occupies residues 370–637 (MTMGGGVLQV…AIALKMLTSV (268 aa)). Over 374-378 (GGVLQ) the chain is Cytoplasmic. A helical membrane pass occupies residues 379-399 (VAGMMVFFGYGMYLIRPVVFL). The Lumenal portion of the chain corresponds to 400-416 (TNVVVYGAASLRNDKAQ). Residues 417 to 437 (LVQWDKVKPLIPWGIAGVILG) traverse the membrane as a helical segment. Position 438 (tyrosine 438) is a topological domain, cytoplasmic. A helical transmembrane segment spans residues 439–459 (FIGNAIGDSVVGILLGLFALI). Residues 460–517 (MAGKAVMEILQPNAGEETAESISATEAEDEMDELMALADGTSRPKASGLALPEGHARS) lie on the Lumenal side of the membrane. Residues 518-538 (AVLGLPMGLFSGILGISGGVI) form a helical membrane-spanning segment. The Cytoplasmic segment spans residues 539–554 (EVPLQRYVGRISLQNA). The helical transmembrane segment at 555-575 (IANSSVLVFWASVAGSVVAFL) threads the bilayer. Residues 576–586 (HGSSTGLIHWE) lie on the Lumenal side of the membrane. A helical membrane pass occupies residues 587–607 (APVTLALVMIPGAYVGGIIGA). Topologically, residues 608–616 (RLMRVLPVR) are cytoplasmic. A helical membrane pass occupies residues 617 to 637 (VLKGVYAATMAAIALKMLTSV).

The protein in the N-terminal section; belongs to the peptidase S1C family. It in the C-terminal section; belongs to the 4-toluene sulfonate uptake permease (TSUP) (TC 2.A.102) family. A metal cation is required as a cofactor. Subject to proteolytic cleavage by MamE.

It localises to the magnetosome membrane. Its function is as follows. Plays 2 roles; promotes magnetite nucleation/formation and activates the MamE protease. Despite its near conservation of a protease-like sequence, this is probably not a protease. Required in conjunction with MamP for proteolysis of at least MamE, itself and MamP. May transport a solute that controls MamE's protease activity. May place individual iron atoms into the magnetite lattice. The chain is Probable membrane transporter protein MamO (mamO) from Paramagnetospirillum magneticum (strain ATCC 700264 / AMB-1) (Magnetospirillum magneticum).